The following is a 466-amino-acid chain: MSLSLWQQCLARLQDELPATEFSMWIRPLQAELSDNTLALYAPNRFVLDWVRDKYLNNINGLLNTFCGADAPQLRFEVGTKPVTQTLKTPVHNVVAPTQTTTAQPQRVAPAARSGWDNVPAPAEPTYRSNVNVKHTFDNFVEGKSNQLARAAARQVADNPGGAYNPLFLYGGTGLGKTHLLHAVGNGIMARKPNAKVVYMHSERFVQDMVKALQNNAIEEFKRYYRSVDALLIDDIQFFANKERSQEEFFHTFNALLEGNQQIILTSDRYPKEINGVEDRLKSRFGWGLTVAIEPPELETRVAILMKKADENDIRLPGEVAFFIAKRLRSNVRELEGALNRVIANANFTGRAITIDFVREALRDLLALQEKLVTIDNIQKTVAEYYKIKIADLLSKRRSRSVARPRQMAMALAKELTNHSLPEIGDAFGGRDHTTVLHACRKIEQLREESHDIKEDFSNLIRTLSS.

The domain I, interacts with DnaA modulators stretch occupies residues 1–86 (MSLSLWQQCL…EVGTKPVTQT (86 aa)). The interval 86–129 (TLKTPVHNVVAPTQTTTAQPQRVAPAARSGWDNVPAPAEPTYRS) is domain II. Residues 130-346 (NVNVKHTFDN…GALNRVIANA (217 aa)) form a domain III, AAA+ region region. Residues glycine 174, glycine 176, lysine 177, and threonine 178 each coordinate ATP. Residues 347 to 466 (NFTGRAITID…FSNLIRTLSS (120 aa)) are domain IV, binds dsDNA.

It belongs to the DnaA family. In terms of assembly, oligomerizes as a right-handed, spiral filament on DNA at oriC.

It localises to the cytoplasm. Plays an essential role in the initiation and regulation of chromosomal replication. ATP-DnaA binds to the origin of replication (oriC) to initiate formation of the DNA replication initiation complex once per cell cycle. Binds the DnaA box (a 9 base pair repeat at the origin) and separates the double-stranded (ds)DNA. Forms a right-handed helical filament on oriC DNA; dsDNA binds to the exterior of the filament while single-stranded (ss)DNA is stabiized in the filament's interior. The ATP-DnaA-oriC complex binds and stabilizes one strand of the AT-rich DNA unwinding element (DUE), permitting loading of DNA polymerase. After initiation quickly degrades to an ADP-DnaA complex that is not apt for DNA replication. Binds acidic phospholipids. The sequence is that of Chromosomal replication initiator protein DnaA from Salmonella enteritidis PT4 (strain P125109).